A 343-amino-acid polypeptide reads, in one-letter code: tRNA N6-adenosine threonylcarbamoyltransferase (343 aa).

Fe cation-binding residues include H115 and H119. Substrate contacts are provided by residues 138-142 (LVSGA), D171, G184, and N276. D304 provides a ligand contact to Fe cation.

The protein belongs to the KAE1 / TsaD family. Fe(2+) serves as cofactor.

Its subcellular location is the cytoplasm. The enzyme catalyses L-threonylcarbamoyladenylate + adenosine(37) in tRNA = N(6)-L-threonylcarbamoyladenosine(37) in tRNA + AMP + H(+). Its function is as follows. Required for the formation of a threonylcarbamoyl group on adenosine at position 37 (t(6)A37) in tRNAs that read codons beginning with adenine. Is involved in the transfer of the threonylcarbamoyl moiety of threonylcarbamoyl-AMP (TC-AMP) to the N6 group of A37, together with TsaE and TsaB. TsaD likely plays a direct catalytic role in this reaction. This is tRNA N6-adenosine threonylcarbamoyltransferase from Buchnera aphidicola subsp. Cinara cedri (strain Cc).